The following is a 2290-amino-acid chain: Armadillo repeat-containing X-linked protein 4 (2290 aa).

The chain crosses the membrane as a helical span at residues 7–24; the sequence is VGWVTAGLVIWAGTCYYI. Disordered stretches follow at residues 517–549, 564–583, 967–988, 1014–1087, 1302–1430, 1521–1715, 1911–1931, and 1954–1973; these read QGEA…TCTQ, SRVD…TKAD, KVRG…VGSA, AVPK…ACRK, GSWA…ANSG, GSWG…RSED, SNTF…AGDN, and NENT…KSSE. Positions 526-536 are enriched in basic residues; the sequence is GKARGKAKAKC. Over residues 1073–1087 the composition is skewed to polar residues; it reads TSESEGGSGTQACRK. 2 stretches are compositionally biased toward gly residues: residues 1328–1341 and 1403–1414; these read SWAG…GGSM and AGAGGQAGGGSK. Residues 1419–1430 show a composition bias toward polar residues; sequence DQSSGRSWANSG. Positions 1521 to 1535 are enriched in gly residues; that stretch reads GSWGGASGQDVGGSR. A compositionally biased stretch (polar residues) spans 1537–1558; sequence GPTNQSSAGSWDSPGSQVSGSC. Gly residues-rich tracts occupy residues 1581 to 1598 and 1609 to 1623; these read IGGG…GGSR and GSWG…GGAR. Residues 1628 to 1645 show a composition bias toward polar residues; sequence DQSSGGSWAGTGNQSSGR. Residues 1674-1687 are compositionally biased toward low complexity; the sequence is GAGSQASGESWAGS. ARM repeat units follow at residues 2031–2071, 2073–2112, 2153–2192, and 2194–2234; these read RCKH…NSAD, SYSH…NISV, ITSE…NFSK, and PSMT…NINY.

Belongs to the eutherian X-chromosome-specific Armcx family.

The protein resides in the membrane. The polypeptide is Armadillo repeat-containing X-linked protein 4 (ARMCX4) (Homo sapiens (Human)).